A 404-amino-acid chain; its full sequence is Adenosylhomocysteinase (404 aa).

Asp114 and Glu139 together coordinate substrate. 140-142 (TTT) serves as a coordination point for NAD(+). 2 residues coordinate substrate: Lys169 and Asp173. Residues Asn174, 203-208 (GYGWCG), Glu226, Asn261, 282-284 (AGH), and Asn329 each bind NAD(+).

This sequence belongs to the adenosylhomocysteinase family. NAD(+) serves as cofactor.

Its subcellular location is the cytoplasm. It carries out the reaction S-adenosyl-L-homocysteine + H2O = L-homocysteine + adenosine. It functions in the pathway amino-acid biosynthesis; L-homocysteine biosynthesis; L-homocysteine from S-adenosyl-L-homocysteine: step 1/1. In terms of biological role, may play a key role in the regulation of the intracellular concentration of adenosylhomocysteine. This is Adenosylhomocysteinase from Thermotoga maritima (strain ATCC 43589 / DSM 3109 / JCM 10099 / NBRC 100826 / MSB8).